Here is a 574-residue protein sequence, read N- to C-terminus: Proline--tRNA ligase (574 aa).

This sequence belongs to the class-II aminoacyl-tRNA synthetase family. ProS type 1 subfamily. As to quaternary structure, homodimer.

The protein localises to the cytoplasm. The enzyme catalyses tRNA(Pro) + L-proline + ATP = L-prolyl-tRNA(Pro) + AMP + diphosphate. Its function is as follows. Catalyzes the attachment of proline to tRNA(Pro) in a two-step reaction: proline is first activated by ATP to form Pro-AMP and then transferred to the acceptor end of tRNA(Pro). As ProRS can inadvertently accommodate and process non-cognate amino acids such as alanine and cysteine, to avoid such errors it has two additional distinct editing activities against alanine. One activity is designated as 'pretransfer' editing and involves the tRNA(Pro)-independent hydrolysis of activated Ala-AMP. The other activity is designated 'posttransfer' editing and involves deacylation of mischarged Ala-tRNA(Pro). The misacylated Cys-tRNA(Pro) is not edited by ProRS. In Nitrosococcus oceani (strain ATCC 19707 / BCRC 17464 / JCM 30415 / NCIMB 11848 / C-107), this protein is Proline--tRNA ligase.